We begin with the raw amino-acid sequence, 325 residues long: Envelope protein H3 (325 aa).

At 1–285 (MATVNKTPVI…FTTPLISFFG (285 aa)) the chain is on the virion surface side. The chain crosses the membrane as a helical; Signal-anchor span at residues 286-306 (LFDINVIGLIVILFIMFMLIF). Residues 307-325 (NVKSKLLWFLTGTFVTAFI) lie on the Intravirion side of the membrane.

This sequence belongs to the orthopoxvirus OPG108 family. Post-translationally, does not contain disulfide bonds.

The protein localises to the virion membrane. In terms of biological role, envelope protein that binds to heparan sulfate on the cell surface and might provide virion attachment to target cell. This chain is Envelope protein H3 (OPG108), found in Variola virus (isolate Human/India/Ind3/1967) (VARV).